A 359-amino-acid polypeptide reads, in one-letter code: Stearoyl-CoA desaturase (359 aa).

Residues 1-72 (MPAHLLQEEI…EGPKPKLEYV (72 aa)) lie on the Cytoplasmic side of the membrane. Residues 73 to 93 (WRNIILMGLLHLGALYGITLI) traverse the membrane as a helical segment. N75 lines the substrate pocket. Topologically, residues 94–97 (PTCK) are lumenal. The chain crosses the membrane as a helical span at residues 98–118 (IYTFLWVLFYYMMSALGITAG). Residues 119–217 (VHRLWSHRTY…EKLVMFQRRY (99 aa)) lie on the Cytoplasmic side of the membrane. Residues H120 and H125 each contribute to the Fe cation site. The short motif at 120–125 (HRLWSH) is the Histidine box-1 element. Positions 148, 155, and 156 each coordinate substrate. 3 residues coordinate Fe cation: H157, H160, and H161. The short motif at 157-161 (HRAHH) is the Histidine box-2 element. The substrate site is built by R188 and K189. S203 carries the post-translational modification Phosphoserine. Residues 218 to 237 (YKPGVLLLCFILPTLVPWYL) traverse the membrane as a helical segment. The Lumenal portion of the chain corresponds to 238 to 241 (WGET). A helical membrane pass occupies residues 242–263 (FQNSLFFATLLRYAVVLNATWL). W262 contributes to the substrate binding site. Residues 264 to 359 (VNSAAHMYGY…RTGEESCKSG (96 aa)) are Cytoplasmic-facing. H269, H298, H301, and H302 together coordinate Fe cation. Positions 298 to 302 (HNYHH) match the Histidine box-3 motif.

It belongs to the fatty acid desaturase type 1 family. Requires Fe(2+) as cofactor.

It localises to the endoplasmic reticulum membrane. It catalyses the reaction octadecanoyl-CoA + 2 Fe(II)-[cytochrome b5] + O2 + 2 H(+) = (9Z)-octadecenoyl-CoA + 2 Fe(III)-[cytochrome b5] + 2 H2O. The catalysed reaction is hexadecanoyl-CoA + 2 Fe(II)-[cytochrome b5] + O2 + 2 H(+) = (9Z)-hexadecenoyl-CoA + 2 Fe(III)-[cytochrome b5] + 2 H2O. Functionally, stearoyl-CoA desaturase that utilizes O(2) and electrons from reduced cytochrome b5 to introduce the first double bond into saturated fatty acyl-CoA substrates. Catalyzes the insertion of a cis double bond at the delta-9 position into fatty acyl-CoA substrates including palmitoyl-CoA and stearoyl-CoA. Gives rise to a mixture of 16:1 and 18:1 unsaturated fatty acids. Plays an important role in lipid biosynthesis. Plays an important role in regulating the expression of genes that are involved in lipogenesis and in regulating mitochondrial fatty acid oxidation. Plays an important role in body energy homeostasis. Contributes to the biosynthesis of membrane phospholipids, cholesterol esters and triglycerides. The chain is Stearoyl-CoA desaturase (SCD) from Capra hircus (Goat).